The chain runs to 111 residues: MNSRLVLLLAVSVALVSAIAVGNRSSHLKKSKECSSDGHTERCEYTGDLTVKTDSTCNHSTYIMTKVTPPNESPSNGVAHCRTAPCNSEDYADVDCLVAFGADNIAAIEKQ.

The signal sequence occupies residues 1–18; it reads MNSRLVLLLAVSVALVSA. N-linked (GlcNAc...) asparagine glycans are attached at residues asparagine 23 and asparagine 58.

This sequence belongs to the UPF0375 family.

The protein localises to the secreted. This is UPF0375 protein ule-4 from Caenorhabditis elegans.